Consider the following 180-residue polypeptide: Large ribosomal subunit protein uL6 (180 aa).

It belongs to the universal ribosomal protein uL6 family. In terms of assembly, part of the 50S ribosomal subunit.

In terms of biological role, this protein binds to the 23S rRNA, and is important in its secondary structure. It is located near the subunit interface in the base of the L7/L12 stalk, and near the tRNA binding site of the peptidyltransferase center. This Anaeromyxobacter sp. (strain Fw109-5) protein is Large ribosomal subunit protein uL6.